We begin with the raw amino-acid sequence, 180 residues long: Large ribosomal subunit protein uL10 (180 aa).

Belongs to the universal ribosomal protein uL10 family. In terms of assembly, part of the ribosomal stalk of the 50S ribosomal subunit. The N-terminus interacts with L11 and the large rRNA to form the base of the stalk. The C-terminus forms an elongated spine to which L12 dimers bind in a sequential fashion forming a multimeric L10(L12)X complex.

Forms part of the ribosomal stalk, playing a central role in the interaction of the ribosome with GTP-bound translation factors. This Thermosipho africanus (strain TCF52B) protein is Large ribosomal subunit protein uL10.